A 529-amino-acid chain; its full sequence is MAEDSESAASQQSLELDDQDTCGIDGDNEEETEHAKGSPGGDLGAKKKKKKQKRKKEKPNSGGTKSDSASDSQEIKIQQSSKHNAIWQQISAGAAMGGDTMEGEWIDLRMYHKNPTIPIQKLQDIQRAMELLSACQGPARNIDEATKRRYQFWDTQPVPKLNEVITSHGAIEPDKDNIRQEPYSLPQGFMWDTLDLSNAEVLKELYTLLNENYVEDDDNMFRFDYSPEFLLWALRPPGWLLQWHCGVRVSSNKKLVGFISAIPANIRIYDSVKRMVEINFLCVHKKLRSKRVAPVLIREITRRVNLEGIFQAVYTAGVVLPKPVATCRYWHRSLNPRKLVEVKFSHLSRNMTLQRTMKLYRLPDVTKTSGLRPMEPKDIKAVRELINIYLKQFHLAPVMDDAEVAHWFLPREHIIDTFVVENPSGKLTDFLSFYTLPSTVMHHPAHKSLKAAYSFYNIHTETPLLDLMNDALIIAKLKGFDVFNALDLMENKTFLEKLKFGIGDGNLQYYLYNWRCPGTDSEKVGLVLQ.

The tract at residues 1 to 82 is disordered; it reads MAEDSESAAS…QEIKIQQSSK (82 aa). Acidic residues predominate over residues 15–32; sequence ELDDQDTCGIDGDNEEET. Residue S38 is modified to Phosphoserine. The segment covering 46-57 has biased composition (basic residues); that stretch reads KKKKKKQKRKKE. Polar residues predominate over residues 61-82; it reads SGGTKSDSASDSQEIKIQQSSK. Tetradecanoyl-CoA is bound by residues W153, L281, V283, S289, R291, V292, and A293.

It belongs to the NMT family.

It localises to the cytoplasm. Its subcellular location is the membrane. It carries out the reaction N-terminal glycyl-[protein] + tetradecanoyl-CoA = N-tetradecanoylglycyl-[protein] + CoA + H(+). The enzyme catalyses N-terminal glycyl-L-lysyl-[protein] + tetradecanoyl-CoA = N-terminal glycyl-(N(6)-tetradecanoyl)-L-lysyl-[protein] + CoA + H(+). Adds a myristoyl group to the N-terminal glycine residue of certain cellular and viral proteins. Also able to mediate N-terminal lysine myristoylation of proteins: catalyzes myristoylation of ARF6 on both 'Gly-2' and 'Lys-3'. Lysine myristoylation is required to maintain ARF6 on membranes during the GTPase cycle. The chain is Glycylpeptide N-tetradecanoyltransferase 2 (Nmt2) from Mus musculus (Mouse).